A 477-amino-acid polypeptide reads, in one-letter code: Epoxyalcohol synthase CYP5164B1 (477 aa).

Cys421 serves as a coordination point for heme.

Belongs to the cytochrome P450 family. The cofactor is heme.

It carries out the reaction (9S)-hydroperoxy-(10E,12Z)-octadecadienoate = (11S)-hydroxy-(9S,10S)-epoxy-(12Z)-octadecenoate. The catalysed reaction is (13S)-hydroperoxy-(9Z,11E)-octadecadienoate = 11-hydroxy-12,13-epoxy-(9Z)-octadecenoate. Its pathway is lipid metabolism; oxylipin biosynthesis. Cytochrome P450 epoxyalcohol synthase involved in the metabolism of oxylipins 'ectocarpins' natural products, such as hybridalactone, ecklonilactones and derivatives. Isomerizes the hydroperoxides into epoxyalcohols via epoxyallylic radical. Can use linoleic acid 9-hydroperoxide ((9S,10E,12Z)-9-hydroperoxy-10,12-octadecadienoic, 9-HPOD) as preferred substrate to produce (9S,10S,11S,12Z)-9,10-epoxy-11-hydroxy-12-octadecenoic acid and, to a lower extent, active with linoleate 13-hydroperoxide ((9Z,11E,13S)-13-hydroperoxy-9,11-octadecadienoic, 13-HPOD) to produce 11-hydroxy-12,13-epoxy-9-octadecenoic acid. No activity toward alpha-linolenic acid 9- and 13-hydroperoxides, and toward eicosapentaenoic acid 15-hydroperoxide. This is Epoxyalcohol synthase CYP5164B1 from Ectocarpus siliculosus (Brown alga).